Consider the following 293-residue polypeptide: Energy-coupling factor transporter ATP-binding protein EcfA2 (293 aa).

The ABC transporter domain occupies 3 to 246 (ITFQKVEHRY…ADELEKIGVD (244 aa)). Residue 40 to 47 (GHTGSGKS) participates in ATP binding.

Belongs to the ABC transporter superfamily. Energy-coupling factor EcfA family. In terms of assembly, forms a stable energy-coupling factor (ECF) transporter complex composed of 2 membrane-embedded substrate-binding proteins (S component), 2 ATP-binding proteins (A component) and 2 transmembrane proteins (T component).

The protein localises to the cell membrane. In terms of biological role, ATP-binding (A) component of a common energy-coupling factor (ECF) ABC-transporter complex. Unlike classic ABC transporters this ECF transporter provides the energy necessary to transport a number of different substrates. The polypeptide is Energy-coupling factor transporter ATP-binding protein EcfA2 (Bacillus cereus (strain ATCC 10987 / NRS 248)).